Here is a 452-residue protein sequence, read N- to C-terminus: tRNA modification GTPase MnmE (452 aa).

3 residues coordinate (6S)-5-formyl-5,6,7,8-tetrahydrofolate: arginine 25, glutamate 82, and arginine 125. Positions 221-374 (GLHVVLAGKP…LRARLLALAG (154 aa)) constitute a TrmE-type G domain. K(+) is bound at residue asparagine 231. GTP contacts are provided by residues 231–236 (NVGKSS), 250–256 (TPIAGTT), 275–278 (DTAG), and 355–357 (SAR). Serine 235 provides a ligand contact to Mg(2+). K(+)-binding residues include threonine 250, isoleucine 252, and threonine 255. Threonine 256 is a Mg(2+) binding site. Lysine 452 serves as a coordination point for (6S)-5-formyl-5,6,7,8-tetrahydrofolate.

Belongs to the TRAFAC class TrmE-Era-EngA-EngB-Septin-like GTPase superfamily. TrmE GTPase family. In terms of assembly, homodimer. Heterotetramer of two MnmE and two MnmG subunits. It depends on K(+) as a cofactor.

It localises to the cytoplasm. Its function is as follows. Exhibits a very high intrinsic GTPase hydrolysis rate. Involved in the addition of a carboxymethylaminomethyl (cmnm) group at the wobble position (U34) of certain tRNAs, forming tRNA-cmnm(5)s(2)U34. This chain is tRNA modification GTPase MnmE, found in Bordetella petrii (strain ATCC BAA-461 / DSM 12804 / CCUG 43448).